The following is a 91-amino-acid chain: Small ribosomal subunit protein uS19 (91 aa).

This sequence belongs to the universal ribosomal protein uS19 family.

Protein S19 forms a complex with S13 that binds strongly to the 16S ribosomal RNA. The sequence is that of Small ribosomal subunit protein uS19 from Prochlorococcus marinus (strain SARG / CCMP1375 / SS120).